Here is a 496-residue protein sequence, read N- to C-terminus: Glycerol kinase (496 aa).

An ADP-binding site is contributed by Thr-12. ATP-binding residues include Thr-12, Thr-13, and Ser-14. Thr-12 is a sn-glycerol 3-phosphate binding site. Residue Arg-16 participates in ADP binding. Residues Arg-82, Glu-83, and Tyr-134 each coordinate sn-glycerol 3-phosphate. Arg-82, Glu-83, and Tyr-134 together coordinate glycerol. His-230 is subject to Phosphohistidine; by HPr. Asp-244 contacts sn-glycerol 3-phosphate. Residues Asp-244 and Gln-245 each contribute to the glycerol site. Positions 266 and 309 each coordinate ADP. ATP is bound by residues Thr-266, Gly-309, Gln-313, and Gly-410. ADP is bound by residues Gly-410 and Asn-414.

Belongs to the FGGY kinase family. Homotetramer and homodimer (in equilibrium). In terms of processing, the phosphoenolpyruvate-dependent sugar phosphotransferase system (PTS), including enzyme I, and histidine-containing protein (HPr) are required for the phosphorylation, which leads to the activation of the enzyme.

It catalyses the reaction glycerol + ATP = sn-glycerol 3-phosphate + ADP + H(+). The protein operates within polyol metabolism; glycerol degradation via glycerol kinase pathway; sn-glycerol 3-phosphate from glycerol: step 1/1. Activated by phosphorylation and inhibited by fructose 1,6-bisphosphate (FBP). Key enzyme in the regulation of glycerol uptake and metabolism. Catalyzes the phosphorylation of glycerol to yield sn-glycerol 3-phosphate. The polypeptide is Glycerol kinase (Bacillus velezensis (strain DSM 23117 / BGSC 10A6 / LMG 26770 / FZB42) (Bacillus amyloliquefaciens subsp. plantarum)).